A 2335-amino-acid polypeptide reads, in one-letter code: Serine/threonine-protein kinase tor1 (2335 aa).

HEAT repeat units lie at residues 1–31, 164–201, 331–371, 410–449, 474–512, 522–560, 562–596, 642–679, 684–722, 728–766, 843–880, 904–923, 924–961, 964–1003, and 1005–1042; these read MEYF…SSTK, LYIS…VVCQ, PYLQ…AVKL, PIQE…AREP, YSLI…RDPI, ESVA…RHLA, PDNI…YNPA, PYIQ…VEGE, DVRG…RSGY, LDYP…LDPY, VFLP…IIGP, LLVI…DEFK, FYLP…FGSN, EYMH…SVNF, and DHAS…QLGY. An FAT domain is found at 1226–1781; the sequence is VISAHASKCN…VYSLTVSSKS (556 aa). The 315-residue stretch at 1955–2269 folds into the PI3K/PI4K catalytic domain; the sequence is FHHTFEVISS…ARHADYAALS (315 aa). Residues 1961–1967 form a G-loop region; the sequence is VISSKQR. Position 1972 is a phosphothreonine; by PKB/AKT1 (Thr-1972). The tract at residues 2134–2142 is catalytic loop; it reads GLGDRHPSN. Residues 2154-2179 form an activation loop region; the sequence is HIDFGDCFEVAMHREKFPEKIPFRLT. Residues 2303-2335 form the FATC domain; the sequence is EQLPVKAQVEKLIQQATAPENLCRCYVGWCSFW.

This sequence belongs to the PI3/PI4-kinase family. The target of rapamycin complex 2 (TORC2) is composed of at least bit61, pop3/wat1, sin1, ste20 and tor1. Phosphorylation at Thr-1972 in the ATP-binding region by AKT1 strongly reduces kinase activity.

It is found in the cytoplasm. It carries out the reaction L-seryl-[protein] + ATP = O-phospho-L-seryl-[protein] + ADP + H(+). The enzyme catalyses L-threonyl-[protein] + ATP = O-phospho-L-threonyl-[protein] + ADP + H(+). Catalytic component of TORC2, which regulates multiple cellular processes to control cell growth in response to environmental signals. In response to signals, TORC2 phosphorylates AGC protein kinase family members. TORC2 is required for cell survival under various stress conditions. TORC2 positively controls G1 cell-cycle arrest, sexual development and amino acid uptake. Positively regulates amino acid uptake through the control of expression of amino acid permeases. Responsible for the phosphorylation of AGC kinase gad8 at 'Ser-527' and 'Ser-546', activating gad8 kinase activity and promoting sexual development. The polypeptide is Serine/threonine-protein kinase tor1 (Schizosaccharomyces pombe (strain 972 / ATCC 24843) (Fission yeast)).